The primary structure comprises 226 residues: NADH-ubiquinone oxidoreductase chain 6 (226 aa).

The next 5 membrane-spanning stretches (helical) occupy residues 2–22 (STLGLLIMLLGIIIMCTLVIL), 28–48 (IYSILNLIVIYGCYASILLTV), 56–76 (IYILVNVGAIAVLFLFIVMMI), 90–110 (YNIYMIVGIIGVVGLLGILIT), and 169–189 (IWFIMACIILLIGMVGVIYIT).

The protein belongs to the complex I subunit 6 family.

It is found in the mitochondrion membrane. It carries out the reaction a ubiquinone + NADH + 5 H(+)(in) = a ubiquinol + NAD(+) + 4 H(+)(out). Core subunit of the mitochondrial membrane respiratory chain NADH dehydrogenase (Complex I) that is believed to belong to the minimal assembly required for catalysis. Complex I functions in the transfer of electrons from NADH to the respiratory chain. The immediate electron acceptor for the enzyme is believed to be ubiquinone. The sequence is that of NADH-ubiquinone oxidoreductase chain 6 (nad6) from Dictyostelium discoideum (Social amoeba).